The sequence spans 262 residues: Hemin import ATP-binding protein HmuV (262 aa).

Residues 3–244 (LQARNLTLAR…DHMRRVYGIE (242 aa)) enclose the ABC transporter domain. 35-42 (GANGAGKS) serves as a coordination point for ATP.

The protein belongs to the ABC transporter superfamily. Heme (hemin) importer (TC 3.A.1.14.5) family. The complex is composed of two ATP-binding proteins (HmuV), two transmembrane proteins (HmuU) and a solute-binding protein (HmuT).

The protein localises to the cell inner membrane. Part of the ABC transporter complex HmuTUV involved in hemin import. Responsible for energy coupling to the transport system. The polypeptide is Hemin import ATP-binding protein HmuV (Bordetella bronchiseptica (strain ATCC BAA-588 / NCTC 13252 / RB50) (Alcaligenes bronchisepticus)).